Consider the following 255-residue polypeptide: Zinc-finger homeodomain protein 6 (255 aa).

The tract at residues 1–35 (MEFRGHDEPVDEMGVAYGRTPPSSSSSPAASASAG) is disordered. The span at 21-35 (PPSSSSSPAASASAG) shows a compositional bias: low complexity. Residues 45–93 (YHECLRNHAAAMGGHVVDGCREFMPMPGDAADALKCAACGCHRSFHRKD) form a ZF-HD dimerization-type; degenerate zinc finger. The segment covering 106–126 (PSPPTPRVPLLMPPPQPQPHP) has biased composition (pro residues). 2 disordered regions span residues 106–181 (PSPP…KFTP) and 226–255 (NNKS…QQQQ). Over residues 139-153 (YHHTPSGSGGTTTES) the composition is skewed to low complexity. The homeobox DNA-binding region spans 172 to 235 (RKRFRTKFTP…NNKSSIGSSS (64 aa)). Over residues 240-255 (RRQPQEQQSQQQQQQQ) the composition is skewed to low complexity.

As to quaternary structure, homo- and heterodimer with other ZFHD proteins.

It is found in the nucleus. Its function is as follows. Putative transcription factor. This is Zinc-finger homeodomain protein 6 (ZHD6) from Oryza sativa subsp. japonica (Rice).